The primary structure comprises 161 residues: 2-C-methyl-D-erythritol 2,4-cyclodiphosphate synthase (161 aa).

A divalent metal cation contacts are provided by Asp11 and His13. 4-CDP-2-C-methyl-D-erythritol 2-phosphate-binding positions include Asp11 to His13 and His37 to Ser38. An a divalent metal cation-binding site is contributed by His45. 4-CDP-2-C-methyl-D-erythritol 2-phosphate contacts are provided by residues Asp59–Gly61, Thr135–Glu138, and Arg145.

Belongs to the IspF family. As to quaternary structure, homotrimer. A divalent metal cation serves as cofactor.

It carries out the reaction 4-CDP-2-C-methyl-D-erythritol 2-phosphate = 2-C-methyl-D-erythritol 2,4-cyclic diphosphate + CMP. The protein operates within isoprenoid biosynthesis; isopentenyl diphosphate biosynthesis via DXP pathway; isopentenyl diphosphate from 1-deoxy-D-xylulose 5-phosphate: step 4/6. Functionally, involved in the biosynthesis of isopentenyl diphosphate (IPP) and dimethylallyl diphosphate (DMAPP), two major building blocks of isoprenoid compounds. Catalyzes the conversion of 4-diphosphocytidyl-2-C-methyl-D-erythritol 2-phosphate (CDP-ME2P) to 2-C-methyl-D-erythritol 2,4-cyclodiphosphate (ME-CPP) with a corresponding release of cytidine 5-monophosphate (CMP). The polypeptide is 2-C-methyl-D-erythritol 2,4-cyclodiphosphate synthase (Cyanothece sp. (strain PCC 7425 / ATCC 29141)).